Consider the following 1285-residue polypeptide: ABC-type transporter fsqE (1285 aa).

One can recognise an ABC transmembrane type-1 1 domain in the interval 54 to 343 (VSSICAVLAG…IAPSAQALLS (290 aa)). 6 helical membrane-spanning segments follow: residues 57 to 77 (ICAV…GLLV), 102 to 122 (LYYV…TVGF), 176 to 196 (LAVM…AFIM), 203 to 223 (IISP…AYMV), 281 to 301 (VAGM…LAFW), and 312 to 332 (MSVA…FAII). The ABC transporter 1 domain occupies 380–622 (LDRVGLIYPS…NGAYAALVQK (243 aa)). 413-420 (GSSGSGKS) provides a ligand contact to ATP. Residue Asn467 is glycosylated (N-linked (GlcNAc...) asparagine). Residues 627 to 654 (DTHDHKAPDGARLSIEDDDDEDSRYGGN) form a disordered region. A run of 6 helical transmembrane segments spans residues 707–727 (LFGL…SVFF), 753–773 (GLYV…EIAL), 831–851 (GILT…AIGW), 855–875 (LVCT…LQVL), 931–951 (ILLA…CAAL), and 968–988 (FQVY…GSIF). Residues 713–996 (AILAGLTIPV…IFTYAPDASK (284 aa)) form the ABC transmembrane type-1 2 domain. N-linked (GlcNAc...) asparagine glycosylation is present at Asn1037. Residues 1043–1281 (VEFEHVSFTY…RGKYWEMVSM (239 aa)) enclose the ABC transporter 2 domain. 1078-1085 (GQSGSGKS) serves as a coordination point for ATP. Asn1138 carries an N-linked (GlcNAc...) asparagine glycan.

The protein belongs to the ABC transporter superfamily. ABCB family. Multidrug resistance exporter (TC 3.A.1.201) subfamily.

The protein resides in the membrane. The protein operates within secondary metabolite biosynthesis. ABC-type transporter; part of the gene cluster that mediates the biosynthesis of the isoquinoline alkaloids fumisoquin A, fumisoquin B and fumisoquin C; as well as small amounts of fumipyrrole as a shunt metabolite. The products of the cluster lead to a brown coloration and are important for growth and conidiation. FsqE possibly plays a role of self-protection. The polypeptide is ABC-type transporter fsqE (Aspergillus fumigatus (strain ATCC MYA-4609 / CBS 101355 / FGSC A1100 / Af293) (Neosartorya fumigata)).